A 263-amino-acid chain; its full sequence is Acyl-[acyl-carrier-protein]--UDP-N-acetylglucosamine O-acyltransferase (263 aa).

Belongs to the transferase hexapeptide repeat family. LpxA subfamily. In terms of assembly, homotrimer.

The protein localises to the cytoplasm. The catalysed reaction is a (3R)-hydroxyacyl-[ACP] + UDP-N-acetyl-alpha-D-glucosamine = a UDP-3-O-[(3R)-3-hydroxyacyl]-N-acetyl-alpha-D-glucosamine + holo-[ACP]. Its pathway is glycolipid biosynthesis; lipid IV(A) biosynthesis; lipid IV(A) from (3R)-3-hydroxytetradecanoyl-[acyl-carrier-protein] and UDP-N-acetyl-alpha-D-glucosamine: step 1/6. In terms of biological role, involved in the biosynthesis of lipid A, a phosphorylated glycolipid that anchors the lipopolysaccharide to the outer membrane of the cell. This Xanthomonas oryzae pv. oryzae (strain PXO99A) protein is Acyl-[acyl-carrier-protein]--UDP-N-acetylglucosamine O-acyltransferase.